The primary structure comprises 130 residues: Small ribosomal subunit protein uS9 (130 aa).

The protein belongs to the universal ribosomal protein uS9 family.

The chain is Small ribosomal subunit protein uS9 from Carboxydothermus hydrogenoformans (strain ATCC BAA-161 / DSM 6008 / Z-2901).